The sequence spans 138 residues: Large ribosomal subunit protein bL19 (138 aa).

The protein belongs to the bacterial ribosomal protein bL19 family.

Functionally, this protein is located at the 30S-50S ribosomal subunit interface and may play a role in the structure and function of the aminoacyl-tRNA binding site. This chain is Large ribosomal subunit protein bL19, found in Rickettsia conorii (strain ATCC VR-613 / Malish 7).